The sequence spans 877 residues: Leucine--tRNA ligase (877 aa).

The 'HIGH' region motif lies at 43 to 53; sequence PYPSGRIHMGH. The 'KMSKS' region motif lies at 628-632; sequence KMSKS. Residue Lys631 participates in ATP binding.

It belongs to the class-I aminoacyl-tRNA synthetase family.

It localises to the cytoplasm. The catalysed reaction is tRNA(Leu) + L-leucine + ATP = L-leucyl-tRNA(Leu) + AMP + diphosphate. The chain is Leucine--tRNA ligase from Brucella melitensis biotype 2 (strain ATCC 23457).